Here is a 1481-residue protein sequence, read N- to C-terminus: MQRSPLEKASVVSKLFFSWTRPILKKGYRQRLELSDIYHISSSDSADNLSEKLEREWDRELASKKNPKLINALRRCFFWRFMFYGIILYLGEVTKAVQPLLLGRIIASYDPDNKVERSIAIYLGIGLCLLFIVRTLLLHPAIFGLHHIGMQMRIAMFSLIYKKTLKLSSRVLDKISIGQLVSLLSNNLNKFDEGLALAHFVWIAPLQVTLLMGLLWELLQAFTFCGLAFLIVLALLQAGLGKMMMKYRDQRAGKINERLVITSEMIENIQSVKAYCWEEAMEKIIENLRQTELKLTRKAAYVRYLNSSAFFFSGFFVVFLSVLPYALLKGIILRKIFTTISFCIVLRMAVTRQFPWAVQTWYDSLGAINKIQDFLQKQEYKTLEYNLTTTDVVMENVTAFWEEGFSKLFEKAKENNNSRKISNGDNSLFFSNLLLGTPVLKDISFKIERGQLLAVAGSTGAGKTSLLMMIMGELEPSEGKIKHSGRISFCSQYSWIMPGTIKDNIIFGVSYDEYRYRSVIKACQLEEDISKFAEKDNVVLGEGGITLSGGQRARISLARAVYKDADLYLLDSPFGYLDVLTEKEIFESCICKLMANKTRILVTSKMEHLKKADKILILHEGSIYFYGTFSELQNQRPDFSSKLMGCDTFDQFTAERRNSIITETLRRFSLEGDTSVSWNETKKPSFKQTGEFGEKRKNSILSSINSIRKFSVVQKTSLQMNGIEGAADAPLERRLSLVPHSEPGEGILPRSNAVNSGPTFLGGRRQSVLNLMTGSSVNQGQSIHRKTATSTRKMSLAPQASLAEIDIYSRRLSQDTGLEISEEINEEDLRDCFFDDVENIPAVTTWNTYLRYITVHKSLMFVLIWCLVVFLVEVAASLVVLCLFPKIFFQDKGNSTKSANNSYAVIITSTSSYYIFYIYVGVADTLLALGLFRGLPLVHTLITVSKTLHHKMLQSVLQAPMSTLNTLKTGGILNRFSKDIAVLDDLLPLTIFDFVQLLLIVIGAVVVVSVLQPYIFLATVPVIAAFILLRAYFLHTSQQLKQLESEGRSPIFTHLVTSLKGLWTLRAFGRQPYFETLFHKALNLHTANWFLYLSTLRWFQMRIEMIFVIFFIAVTFISILTTGEGEGRVGIILTLAMNIMGTLQWAVNSSIDVDSLMRSVSRVFKFIDMPTEDGKPNNSFRPSKDSQPSKVMIIENQHVKKDDIWPSGGQMTVKDLTAKYTDGGNAILENISFSISPGQRVGLLGRTGSGKSTLLLAFLRLLNTKGEIQIDGVSWDSITLQQWRKAFGVIPQKVFIFSGTFRKNLDPYGQWSDQEIWKVADEVGLRSVIEQFPGKLDFVLVDGGCVLSHGHKQLMCLARSVLSKAKILLLDEPSAHLDPITYQIIRRTLKQAFANCTVILSEHRIEAMLECQRFLVIEENKVRQYDSIQRMLSEKSLFRQAISPADRLKLLPHRNSSRQRSRSNIAALKEETEEEVQETKL.

The Cytoplasmic portion of the chain corresponds to 1 to 77 (MQRSPLEKAS…KLINALRRCF (77 aa)). Residues 78 to 98 (FWRFMFYGIILYLGEVTKAVQ) traverse the membrane as a helical segment. An ABC transmembrane type-1 1 domain is found at 81 to 365 (FMFYGIILYL…WAVQTWYDSL (285 aa)). Residues 99–122 (PLLLGRIIASYDPDNKVERSIAIY) lie on the Extracellular side of the membrane. A helical transmembrane segment spans residues 123-146 (LGIGLCLLFIVRTLLLHPAIFGLH). Residues 147-195 (HIGMQMRIAMFSLIYKKTLKLSSRVLDKISIGQLVSLLSNNLNKFDEGL) are Cytoplasmic-facing. Residues 196–216 (ALAHFVWIAPLQVTLLMGLLW) form a helical membrane-spanning segment. The Extracellular segment spans residues 217 to 222 (ELLQAF). The chain crosses the membrane as a helical span at residues 223–243 (TFCGLAFLIVLALLQAGLGKM). At 244–298 (MMKYRDQRAGKINERLVITSEMIENIQSVKAYCWEEAMEKIIENLRQTELKLTRK) the chain is on the cytoplasmic side. Residues 299–319 (AAYVRYLNSSAFFFSGFFVVF) form a helical membrane-spanning segment. At 320-339 (LSVLPYALLKGIILRKIFTT) the chain is on the extracellular side. A helical transmembrane segment spans residues 340 to 358 (ISFCIVLRMAVTRQFPWAV). Residues 359–858 (QTWYDSLGAI…YLRYITVHKS (500 aa)) are Cytoplasmic-facing. Residues W401, 457–464 (GSTGAGKT), and Q492 each bind ATP. Positions 423 to 645 (NGDNSLFFSN…RPDFSSKLMG (223 aa)) constitute an ABC transporter 1 domain. C523 is lipidated: S-palmitoyl cysteine. Residue S548 is modified to Phosphoserine. The interval 653–831 (TAERRNSIIT…EEINEEDLRD (179 aa)) is disordered R region. Phosphoserine; by PKA is present on residues S659 and S669. S685 is subject to Phosphoserine; by PKC. K687 participates in a covalent cross-link: Glycyl lysine isopeptide (Lys-Gly) (interchain with G-Cter in ubiquitin). Phosphoserine; by PKA is present on S699. A Phosphoserine modification is found at S711. T716 carries the post-translational modification Phosphothreonine. Phosphoserine; by PKA is present on residues S736 and S767. S790 carries the phosphoserine; by PKC modification. S795 and S813 each carry phosphoserine; by PKA. Residues 859–879 (LMFVLIWCLVVFLVEVAASLV) traverse the membrane as a helical segment. The region spanning 859 to 1155 (LMFVLIWCLV…AVNSSIDVDS (297 aa)) is the ABC transmembrane type-1 2 domain. The Extracellular segment spans residues 880–918 (VLCLFPKIFFQDKGNSTKSANNSYAVIITSTSSYYIFYI). Residues N894 and N900 are each glycosylated (N-linked (GlcNAc...) asparagine). The chain crosses the membrane as a discontinuously helical span at residues 919-939 (YVGVADTLLALGLFRGLPLVH). Residues 940-990 (TLITVSKTLHHKMLQSVLQAPMSTLNTLKTGGILNRFSKDIAVLDDLLPLT) are Cytoplasmic-facing. Residues 991–1011 (IFDFVQLLLIVIGAVVVVSVL) form a helical membrane-spanning segment. The Extracellular portion of the chain corresponds to 1012–1013 (QP). The chain crosses the membrane as a helical span at residues 1014–1034 (YIFLATVPVIAAFILLRAYFL). Residues 1035–1095 (HTSQQLKQLE…TANWFLYLST (61 aa)) are Cytoplasmic-facing. The chain crosses the membrane as a helical span at residues 1096-1116 (LRWFQMRIEMIFVIFFIAVTF). Residues 1117-1130 (ISILTTGEGEGRVG) lie on the Extracellular side of the membrane. A helical membrane pass occupies residues 1131–1151 (IILTLAMNIMGTLQWAVNSSI). Residues 1152–1481 (DVDSLMRSVS…TEEEVQETKL (330 aa)) lie on the Cytoplasmic side of the membrane. One can recognise an ABC transporter 2 domain in the interval 1211 to 1444 (MTVKDLTAKY…KSLFRQAISP (234 aa)). Residues Y1220 and 1245 to 1252 (GRTGSGKS) contribute to the ATP site. An interaction with GORASP2 region spans residues 1387–1481 (RTLKQAFANC…TEEEVQETKL (95 aa)). C1396 is lipidated: S-palmitoyl cysteine. The segment at 1453–1481 (HRNSSRQRSRSNIAALKEETEEEVQETKL) is disordered. S1457 carries the phosphoserine modification. Positions 1471–1481 (ETEEEVQETKL) are enriched in acidic residues. The short motif at 1479-1481 (TKL) is the PDZ-binding element.

The protein belongs to the ABC transporter superfamily. ABCC family. CFTR transporter (TC 3.A.1.202) subfamily. In terms of assembly, monomer; does not require oligomerization for channel activity. May form oligomers in the membrane. Interacts with SLC26A3, SLC26A6 and NHERF1. Interacts with SHANK2. Interacts with MYO6. Interacts (via C-terminus) with GOPC (via PDZ domain); this promotes CFTR internalization and thereby decreases channel activity. Interacts with SLC4A7 through NHERF1. Found in a complex with MYO5B and RAB11A. Interacts with ANO1. Interacts with SLC26A8. Interacts with AHCYL1; the interaction increases CFTR activity. Interacts with CSE1L. The core-glycosylated form interacts with GORASP2 (via PDZ GRASP-type 1 domain) in respone to ER stress. Interacts with MARCHF2; the interaction leads to CFTR ubiqtuitination and degradation. Interacts with ADGRG2. Post-translationally, N-glycosylated. In terms of processing, phosphorylated; cAMP treatment promotes phosphorylation and activates the channel. Dephosphorylation decreases the ATPase activity (in vitro). Phosphorylation at PKA sites activates the channel. Phosphorylation at PKC sites enhances the response to phosphorylation by PKA. Phosphorylated by AMPK; this inhibits channel activity. Ubiquitinated, leading to its degradation in the lysosome. Deubiquitination by USP10 in early endosomes enhances its endocytic recycling to the cell membrane. Ubiquitinated by RNF185 during ER stress. Ubiquitinated by MARCHF2.

It is found in the apical cell membrane. Its subcellular location is the early endosome membrane. The protein resides in the cell membrane. It localises to the recycling endosome membrane. The protein localises to the endoplasmic reticulum membrane. It is found in the nucleus. The enzyme catalyses ATP + H2O + closed Cl(-) channel = ADP + phosphate + open Cl(-) channel.. The catalysed reaction is chloride(in) = chloride(out). It carries out the reaction hydrogencarbonate(in) = hydrogencarbonate(out). It catalyses the reaction ATP + H2O = ADP + phosphate + H(+). Functionally, epithelial ion channel that plays an important role in the regulation of epithelial ion and water transport and fluid homeostasis. Mediates the transport of chloride ions across the cell membrane. Possesses an intrinsic ATPase activity and utilizes ATP to gate its channel; the passive flow of anions through the channel is gated by cycles of ATP binding and hydrolysis by the ATP-binding domains. The ion channel is also permeable to HCO(3)(-); selectivity depends on the extracellular chloride concentration. Exerts its function also by modulating the activity of other ion channels and transporters. Contributes to the regulation of the pH and the ion content of the epithelial fluid layer. Modulates the activity of the epithelial sodium channel (ENaC) complex, in part by regulating the cell surface expression of the ENaC complex. May regulate bicarbonate secretion and salvage in epithelial cells by regulating the transporter SLC4A7. Can inhibit the chloride channel activity of ANO1. Plays a role in the chloride and bicarbonate homeostasis during sperm epididymal maturation and capacitation. This chain is Cystic fibrosis transmembrane conductance regulator, found in Bos taurus (Bovine).